Reading from the N-terminus, the 176-residue chain is Small ribosomal subunit protein uS5 (176 aa).

Residues 11 to 74 form the S5 DRBM domain; it reads LSEVLVDVNR…QAAKKRMMKV (64 aa).

The protein belongs to the universal ribosomal protein uS5 family. As to quaternary structure, part of the 30S ribosomal subunit. Contacts proteins S4 and S8.

Functionally, with S4 and S12 plays an important role in translational accuracy. Located at the back of the 30S subunit body where it stabilizes the conformation of the head with respect to the body. In Rickettsia peacockii (strain Rustic), this protein is Small ribosomal subunit protein uS5.